The chain runs to 871 residues: DNA mismatch repair protein MutS (871 aa).

ATP is bound at residue 605–612; it reads GPNMGGKS. A disordered region spans residues 791 to 840; that stretch reads PQRPTSASVEQPVDSAKTETAATAEEPQQLSLFPTDEETKPKQPTKKERS. The span at 827–840 shows a compositional bias: basic and acidic residues; it reads EETKPKQPTKKERS.

This sequence belongs to the DNA mismatch repair MutS family.

Functionally, this protein is involved in the repair of mismatches in DNA. It is possible that it carries out the mismatch recognition step. This protein has a weak ATPase activity. In Shouchella clausii (strain KSM-K16) (Alkalihalobacillus clausii), this protein is DNA mismatch repair protein MutS.